Consider the following 524-residue polypeptide: Alkaline phosphatase, tissue-nonspecific isozyme (524 aa).

Positions 1 to 17 (MISPFLVLAIGTCLTNS) are cleaved as a signal peptide. Asp-60 provides a ligand contact to Mg(2+). Zn(2+) is bound by residues Asp-60 and Ser-110. The active-site Phosphoserine intermediate is the Ser-110. Position 110 is a phosphoserine (Ser-110). Cys-139 and Cys-201 are oxidised to a cystine. The N-linked (GlcNAc...) asparagine glycan is linked to Asn-140. Position 173 (Thr-173) interacts with Mg(2+). N-linked (GlcNAc...) asparagine glycosylation occurs at Asn-230. Glu-235 is a Ca(2+) binding site. An N-linked (GlcNAc...) asparagine glycan is attached at Asn-271. Ca(2+) is bound by residues Phe-290 and Glu-291. N-linked (GlcNAc...) asparagine glycosylation occurs at Asn-303. Asp-306 provides a ligand contact to Ca(2+). Glu-332 provides a ligand contact to Mg(2+). Zn(2+) is bound by residues Asp-337, His-341, Asp-378, and His-379. Residue Asn-430 is glycosylated (N-linked (GlcNAc...) asparagine). A Zn(2+)-binding site is contributed by His-454. Cys-489 and Cys-497 are oxidised to a cystine. Gly-501 carries the GPI-anchor amidated glycine lipid modification. Positions 502 to 524 (SGSAPSPGALLLPLAVLSLRTLF) are cleaved as a propeptide — removed in mature form.

Belongs to the alkaline phosphatase family. Homodimer. Mg(2+) is required as a cofactor. Requires Zn(2+) as cofactor. It depends on Ca(2+) as a cofactor. Post-translationally, N-glycosylated. As to expression, widely expressed. Expressed in DRG neurons and spinal cord neurons.

It localises to the cell membrane. Its subcellular location is the extracellular vesicle membrane. The protein resides in the mitochondrion membrane. It is found in the mitochondrion intermembrane space. It carries out the reaction a phosphate monoester + H2O = an alcohol + phosphate. The enzyme catalyses diphosphate + H2O = 2 phosphate + H(+). It catalyses the reaction pyridoxal 5'-phosphate + H2O = pyridoxal + phosphate. The catalysed reaction is phosphoethanolamine + H2O = ethanolamine + phosphate. It carries out the reaction N-phosphocreatine + H2O = creatine + phosphate. The enzyme catalyses ATP + H2O = ADP + phosphate + H(+). It catalyses the reaction ADP + H2O = AMP + phosphate + H(+). The catalysed reaction is AMP + H2O = adenosine + phosphate. Its activity is regulated as follows. Phosphatase activity is specifically inhibited by 5-((5-chloro-2-methoxyphenyl)sulfonamido)nicotinamide (SBI-425). Its function is as follows. Alkaline phosphatase that metabolizes various phosphate compounds and plays a key role in skeletal mineralization and adaptive thermogenesis. Has broad substrate specificity and can hydrolyze a considerable variety of compounds: however, only a few substrates, such as diphosphate (inorganic pyrophosphate; PPi), pyridoxal 5'-phosphate (PLP) and N-phosphocreatine are natural substrates. Plays an essential role in skeletal and dental mineralization via its ability to hydrolyze extracellular diphosphate, a potent mineralization inhibitor, to phosphate: it thereby promotes hydroxyapatite crystal formation and increases inorganic phosphate concentration. Acts in a non-redundant manner with PHOSPHO1 in skeletal mineralization: while PHOSPHO1 mediates the initiation of hydroxyapatite crystallization in the matrix vesicles (MVs), ALPL/TNAP catalyzes the spread of hydroxyapatite crystallization in the extracellular matrix. Also promotes dephosphorylation of osteopontin (SSP1), an inhibitor of hydroxyapatite crystallization in its phosphorylated state; it is however unclear whether ALPL/TNAP mediates SSP1 dephosphorylation via a direct or indirect manner. Catalyzes dephosphorylation of PLP to pyridoxal (PL), the transportable form of vitamin B6, in order to provide a sufficient amount of PLP in the brain, an essential cofactor for enzymes catalyzing the synthesis of diverse neurotransmitters. Additionally, also able to mediate ATP degradation in a stepwise manner to adenosine, thereby regulating the availability of ligands for purinergic receptors. Also capable of dephosphorylating microbial products, such as lipopolysaccharides (LPS) as well as other phosphorylated small-molecules, such as poly-inosine:cytosine (poly I:C). Acts as a key regulator of adaptive thermogenesis as part of the futile creatine cycle: localizes to the mitochondria of thermogenic fat cells and acts by mediating hydrolysis of N-phosphocreatine to initiate a futile cycle of creatine dephosphorylation and phosphorylation. During the futile creatine cycle, creatine and N-phosphocreatine are in a futile cycle, which dissipates the high energy charge of N-phosphocreatine as heat without performing any mechanical or chemical work. The chain is Alkaline phosphatase, tissue-nonspecific isozyme from Mus musculus (Mouse).